Consider the following 221-residue polypeptide: ATP-dependent dethiobiotin synthetase BioD (221 aa).

13–18 lines the ATP pocket; the sequence is DIGKTY. Residue T17 participates in Mg(2+) binding. K38 is a catalytic residue. S42 is a substrate binding site. Residues D51, 112–115, and 176–177 contribute to the ATP site; these read EGSG and NR. 2 residues coordinate Mg(2+): D51 and E112.

The protein belongs to the dethiobiotin synthetase family. In terms of assembly, homodimer. It depends on Mg(2+) as a cofactor.

The protein localises to the cytoplasm. The catalysed reaction is (7R,8S)-7,8-diammoniononanoate + CO2 + ATP = (4R,5S)-dethiobiotin + ADP + phosphate + 3 H(+). Its pathway is cofactor biosynthesis; biotin biosynthesis; biotin from 7,8-diaminononanoate: step 1/2. Functionally, catalyzes a mechanistically unusual reaction, the ATP-dependent insertion of CO2 between the N7 and N8 nitrogen atoms of 7,8-diaminopelargonic acid (DAPA, also called 7,8-diammoniononanoate) to form a ureido ring. In Brachyspira hyodysenteriae (strain ATCC 49526 / WA1), this protein is ATP-dependent dethiobiotin synthetase BioD.